The primary structure comprises 164 residues: 2-keto-3-deoxy-D-glycero-D-galacto-9-phosphonononic acid phosphatase (164 aa).

Mg(2+)-binding residues include Asp10 and Asp12. Substrate-binding positions include Thr34, 54 to 56, 64 to 67, and Lys80; these read TGE and RAEK. Asp103 serves as a coordination point for Mg(2+). Asn106 serves as a coordination point for substrate.

The protein belongs to the KdsC family. As to quaternary structure, homotetramer. Mg(2+) is required as a cofactor.

The enzyme catalyses 3-deoxy-D-glycero-beta-D-galacto-non-2-ulopyranosonate 9-phosphate + H2O = 3-deoxy-D-glycero-beta-D-galacto-non-2-ulopyranosonate + phosphate. In terms of biological role, involved in the biosynthesis of 2-keto-3-deoxy-D-glycero-D-galacto-nononic acid used in cell-wall polysaccharides. Catalyzes the hydrolysis of 2-keto-3-deoxy-D-glycero-D-galacto-9-phosphonononic acid (KDN-9-P) to yield 2-keto-3-deoxy-D-glycero-D-galacto-nononic acid (KDN). Also able to hydrolyze N-acetylneuraminate-9-phosphate (Neu5NAc-9-P), 2-keto-3-deoxy-D-manno-octulosonate-8-phosphate (KDO-8-P), phosphoenolpyruvate (PEP), gluconate 6-phosphate, tyrosine phosphate ester and glucose-6-P as substrate. The protein is 2-keto-3-deoxy-D-glycero-D-galacto-9-phosphonononic acid phosphatase of Bacteroides thetaiotaomicron (strain ATCC 29148 / DSM 2079 / JCM 5827 / CCUG 10774 / NCTC 10582 / VPI-5482 / E50).